Reading from the N-terminus, the 717-residue chain is RNA helicase NPH-II (717 aa).

The 192-residue stretch at 193–384 (FEIFISKKNC…IYFKNIVEIY (192 aa)) folds into the Helicase ATP-binding domain. Position 206–213 (206–213 (GGTGIGKT)) interacts with ATP. Residues 331–334 (DEIH) carry the DEXH box motif. The Helicase C-terminal domain occupies 406-566 (ILKNYMPSVG…VFKYNNMDYY (161 aa)).

This sequence belongs to the DEAD box helicase family. DEAH subfamily. In terms of assembly, monomer.

The protein localises to the virion. The catalysed reaction is ATP + H2O = ADP + phosphate + H(+). In terms of biological role, NTP-dependent helicase that catalyzes unidirectional unwinding of 3'tailed duplex RNAs and plays an important role during transcription of early mRNAs, presumably by preventing R-loop formation behind the elongating RNA polymerase. Might also play a role in the export of newly synthesized mRNA chains out of the core into the cytoplasm. Required for replication and propagation of viral particles. This Melanoplus sanguinipes (Migratory grasshopper) protein is RNA helicase NPH-II (NPH2).